The following is a 248-amino-acid chain: MKFIAVLIAAIASLSAVQAQKAIPYDTVVPIPSQTSKTDAQKAAVKYHPQLHIEDGCHPYAAVQADGAISDGLKWSGPQDGACKGSPLGSQVYARSTWVKGKWAIMYAWYFPMGQAPVPPVGLGHRNGWEYAVIWLDRPTADNSTLLGVSLSAAVGWSKEAPAKQKWMDGNSLKVSYYYNNIFRNTAVKYTEEKGEFQTLITWDQLPDAARNALINTDWDETPFNVARVKMPMKDGVFMEKLTGAYPF.

A signal peptide spans 1–19 (MKFIAVLIAAIASLSAVQA). Residues 124–130 (GHRNGWE) carry the Hepta-peptide GHRHDWE motif motif. N-linked (GlcNAc...) asparagine glycosylation is present at Asn-143.

The protein belongs to the Necrosis inducing protein (NPP1) family.

Its subcellular location is the secreted. In terms of biological role, secreted effector that contributes strongly to virulence during infection by P.capsici. The chain is NLP effector protein Pc121494 from Phytophthora capsici.